A 567-amino-acid chain; its full sequence is MATIDKHSYAHMFGPTVGDRVRLADTDLWLEVEKDYTQYGEEVKFGGGKVIRDGMGQSQASCFDTVDLVITNALIVDHWGIIKADVGIKEGRIAIIGKAGNPDIQDNIDIEIGPGTEVIAGEGKILTAGGIDAHIHFICPQQIEEAQMSGVTTMIGGGTGPATGTNATTCTSGPWNIHKMLQATNDFAMNFGFLGKGNTSLPLALEEQIEAGVCGLKLHEDWGTTPASIDNCLAVAERYDVQVAIHTDTLNEAGFVEDTMAAFKGRTIHTYHTEGAGGGHSPDIIRACGEPNVLPSSTNPTRPYTVNTIDEHLDMLMVCHHLDPSIPEDVAFADSRIRKESIAAEDIMHDLGAISMIASDSQAMGRVGEMITRTWQTANKMKQQRGPLAPDTERNDNFRIKRYIAKYTINPAISHGISHEVGSIEVGKLADLVLWKPAFFGIKPAMILKSGFIAAAPMGDANASIPTPQPVYYRPMFGSFGSAAAKTSMTFLSQAAIDQGVPEKIGMTRMVGVCKNTRNIGKKDMIHNNWQPKIEVDAQTYEVRADGELLTCEPATELPLTQRYCLF.

The Urease domain occupies 129 to 567 (GGIDAHIHFI…LPLTQRYCLF (439 aa)). Positions 134, 136, and 217 each coordinate Ni(2+). Lys217 is subject to N6-carboxylysine. His219 serves as a coordination point for substrate. Ni(2+)-binding residues include His246 and His272. The active-site Proton donor is the His320. Asp360 provides a ligand contact to Ni(2+).

It belongs to the metallo-dependent hydrolases superfamily. Urease alpha subunit family. In terms of assembly, heterotrimer of UreA (gamma), UreB (beta) and UreC (alpha) subunits. Three heterotrimers associate to form the active enzyme. It depends on Ni cation as a cofactor. In terms of processing, carboxylation allows a single lysine to coordinate two nickel ions.

The protein localises to the cytoplasm. The enzyme catalyses urea + 2 H2O + H(+) = hydrogencarbonate + 2 NH4(+). Its pathway is nitrogen metabolism; urea degradation; CO(2) and NH(3) from urea (urease route): step 1/1. This is Urease subunit alpha from Psychromonas ingrahamii (strain DSM 17664 / CCUG 51855 / 37).